We begin with the raw amino-acid sequence, 210 residues long: Mating-type-like protein ALPHA2, silenced copy at MTL3 (210 aa).

The segment at residues 108 to 170 (ASYRGHRFTR…NRRRKQKSIY (63 aa)) is a DNA-binding region (homeobox; TALE-type).

Belongs to the TALE/M-ATYP homeobox family.

Its subcellular location is the nucleus. Mating type proteins are sequence specific DNA-binding proteins that act as master switches in yeast differentiation by controlling gene expression in a cell type-specific fashion. This chain is Mating-type-like protein ALPHA2, silenced copy at MTL3 (MTL3alpha2), found in Candida glabrata (strain ATCC 2001 / BCRC 20586 / JCM 3761 / NBRC 0622 / NRRL Y-65 / CBS 138) (Yeast).